Here is a 457-residue protein sequence, read N- to C-terminus: Adenylosuccinate synthetase (457 aa).

Residues 45-51 (GDEGKGK) and 73-75 (GHT) each bind GTP. Asp-46 serves as the catalytic Proton acceptor. The Mg(2+) site is built by Asp-46 and Gly-73. IMP contacts are provided by residues 46 to 49 (DEGK), 71 to 74 (NAGH), Thr-163, Arg-177, Asn-255, Thr-270, and Arg-334. Catalysis depends on His-74, which acts as the Proton donor. 330 to 336 (VTTKRVR) lines the substrate pocket. GTP-binding positions include Arg-336, 362 to 364 (KLD), and 444 to 446 (GVG).

This sequence belongs to the adenylosuccinate synthetase family. As to quaternary structure, homodimer. Mg(2+) is required as a cofactor.

The protein resides in the cytoplasm. It catalyses the reaction IMP + L-aspartate + GTP = N(6)-(1,2-dicarboxyethyl)-AMP + GDP + phosphate + 2 H(+). Its pathway is purine metabolism; AMP biosynthesis via de novo pathway; AMP from IMP: step 1/2. Its function is as follows. Plays an important role in the de novo pathway and in the salvage pathway of purine nucleotide biosynthesis. Catalyzes the first committed step in the biosynthesis of AMP from IMP. This is Adenylosuccinate synthetase from Aedes aegypti (Yellowfever mosquito).